The primary structure comprises 201 residues: Glycerol-3-phosphate acyltransferase (201 aa).

Helical transmembrane passes span 3-23 (LFAI…SAIL), 53-73 (WVAL…VWLG), 80-100 (HFEL…PIFF), 115-135 (IAPI…LIFF), and 153-175 (FYVW…LLIY).

This sequence belongs to the PlsY family. As to quaternary structure, probably interacts with PlsX.

The protein localises to the cell inner membrane. The catalysed reaction is an acyl phosphate + sn-glycerol 3-phosphate = a 1-acyl-sn-glycero-3-phosphate + phosphate. It functions in the pathway lipid metabolism; phospholipid metabolism. Its function is as follows. Catalyzes the transfer of an acyl group from acyl-phosphate (acyl-PO(4)) to glycerol-3-phosphate (G3P) to form lysophosphatidic acid (LPA). This enzyme utilizes acyl-phosphate as fatty acyl donor, but not acyl-CoA or acyl-ACP. The sequence is that of Glycerol-3-phosphate acyltransferase from Pasteurella multocida (strain Pm70).